Consider the following 78-residue polypeptide: Large ribosomal subunit protein bL28 (78 aa).

This sequence belongs to the bacterial ribosomal protein bL28 family.

This is Large ribosomal subunit protein bL28 from Pasteurella multocida (strain Pm70).